The primary structure comprises 342 residues: Elongation factor Ts (342 aa).

The tract at residues 79–82 is involved in Mg(2+) ion dislocation from EF-Tu; that stretch reads TDFV.

Belongs to the EF-Ts family.

It localises to the cytoplasm. Its function is as follows. Associates with the EF-Tu.GDP complex and induces the exchange of GDP to GTP. It remains bound to the aminoacyl-tRNA.EF-Tu.GTP complex up to the GTP hydrolysis stage on the ribosome. This Lactococcus lactis subsp. cremoris (strain MG1363) protein is Elongation factor Ts.